We begin with the raw amino-acid sequence, 68 residues long: Metallothionein-3 (68 aa).

Met-1 bears the N-acetylmethionine mark. A beta region spans residues 1–30 (MDPETCPCPSGGSCTCADSCKCEGCKCTSC). Cys-6, Cys-8, Cys-14, Cys-16, Cys-20, Cys-22, Cys-25, Cys-27, and Cys-30 together coordinate a divalent metal cation. The alpha stretch occupies residues 31–68 (KKSCCSCCPAECEKCAKDCVCKGGEGAEAEAEKCSCCE). Ser-33 bears the Phosphoserine mark. A divalent metal cation is bound by residues Cys-34, Cys-35, Cys-37, Cys-38, Cys-42, Cys-45, Cys-49, Cys-51, Cys-64, Cys-66, and Cys-67.

This sequence belongs to the metallothionein superfamily. Type 1 family.

Its function is as follows. Binds heavy metals. Contains five zinc and one copper atoms per polypeptide chain and only a negligible amount of cadmium. This chain is Metallothionein-3 (MT3), found in Macaca fascicularis (Crab-eating macaque).